The primary structure comprises 203 residues: ATP-dependent Clp protease proteolytic subunit 1 (203 aa).

Ser-101 functions as the Nucleophile in the catalytic mechanism. Residue His-126 is part of the active site.

The protein belongs to the peptidase S14 family. Fourteen ClpP subunits assemble into 2 heptameric rings which stack back to back to give a disk-like structure with a central cavity, resembling the structure of eukaryotic proteasomes.

The protein localises to the cytoplasm. The enzyme catalyses Hydrolysis of proteins to small peptides in the presence of ATP and magnesium. alpha-casein is the usual test substrate. In the absence of ATP, only oligopeptides shorter than five residues are hydrolyzed (such as succinyl-Leu-Tyr-|-NHMec, and Leu-Tyr-Leu-|-Tyr-Trp, in which cleavage of the -Tyr-|-Leu- and -Tyr-|-Trp bonds also occurs).. Cleaves peptides in various proteins in a process that requires ATP hydrolysis. Has a chymotrypsin-like activity. Plays a major role in the degradation of misfolded proteins. The chain is ATP-dependent Clp protease proteolytic subunit 1 from Synechococcus sp. (strain JA-2-3B'a(2-13)) (Cyanobacteria bacterium Yellowstone B-Prime).